The chain runs to 37 residues: Large ribosomal subunit protein bL36 (37 aa).

This sequence belongs to the bacterial ribosomal protein bL36 family.

In Alkaliphilus metalliredigens (strain QYMF), this protein is Large ribosomal subunit protein bL36.